We begin with the raw amino-acid sequence, 491 residues long: Cytosolic Fe-S cluster assembly factor NAR1 (491 aa).

Positions 20, 65, 68, 71, 177, 232, 414, and 418 each coordinate [4Fe-4S] cluster.

Belongs to the NARF family.

Functionally, component of the cytosolic Fe/S protein assembly machinery. Required for maturation of extramitochondrial Fe/S proteins. May play a role in the transfer of pre-assembled Fe/S clusters to target apoproteins. This is Cytosolic Fe-S cluster assembly factor NAR1 (NAR1) from Yarrowia lipolytica (strain CLIB 122 / E 150) (Yeast).